Here is a 444-residue protein sequence, read N- to C-terminus: ATP-dependent protease ATPase subunit HslU (444 aa).

ATP is bound by residues Ile-18, Gly-60–Glu-65, Asp-256, Glu-322, and Arg-394.

This sequence belongs to the ClpX chaperone family. HslU subfamily. In terms of assembly, a double ring-shaped homohexamer of HslV is capped on each side by a ring-shaped HslU homohexamer. The assembly of the HslU/HslV complex is dependent on binding of ATP.

It localises to the cytoplasm. Functionally, ATPase subunit of a proteasome-like degradation complex; this subunit has chaperone activity. The binding of ATP and its subsequent hydrolysis by HslU are essential for unfolding of protein substrates subsequently hydrolyzed by HslV. HslU recognizes the N-terminal part of its protein substrates and unfolds these before they are guided to HslV for hydrolysis. The chain is ATP-dependent protease ATPase subunit HslU from Buchnera aphidicola subsp. Cinara cedri (strain Cc).